The chain runs to 340 residues: Phenylalanine--tRNA ligase alpha subunit (340 aa).

Glu254 contacts Mg(2+).

Belongs to the class-II aminoacyl-tRNA synthetase family. Phe-tRNA synthetase alpha subunit type 1 subfamily. As to quaternary structure, tetramer of two alpha and two beta subunits. Mg(2+) is required as a cofactor.

The protein resides in the cytoplasm. It carries out the reaction tRNA(Phe) + L-phenylalanine + ATP = L-phenylalanyl-tRNA(Phe) + AMP + diphosphate + H(+). The chain is Phenylalanine--tRNA ligase alpha subunit from Acidithiobacillus ferrooxidans (strain ATCC 23270 / DSM 14882 / CIP 104768 / NCIMB 8455) (Ferrobacillus ferrooxidans (strain ATCC 23270)).